The chain runs to 294 residues: Cytidine deaminase (294 aa).

CMP/dCMP-type deaminase domains follow at residues 48–168 (DEDA…FGPK) and 186–294 (LEGD…VLLG). 89–91 (NME) is a substrate binding site. His-102 provides a ligand contact to Zn(2+). Glu-104 serves as the catalytic Proton donor. Zn(2+)-binding residues include Cys-129 and Cys-132.

This sequence belongs to the cytidine and deoxycytidylate deaminase family. Homodimer. Zn(2+) is required as a cofactor.

It carries out the reaction cytidine + H2O + H(+) = uridine + NH4(+). The catalysed reaction is 2'-deoxycytidine + H2O + H(+) = 2'-deoxyuridine + NH4(+). This enzyme scavenges exogenous and endogenous cytidine and 2'-deoxycytidine for UMP synthesis. The protein is Cytidine deaminase of Citrobacter koseri (strain ATCC BAA-895 / CDC 4225-83 / SGSC4696).